The primary structure comprises 161 residues: GTP-dependent dephospho-CoA kinase (161 aa).

5 residues coordinate GTP: D40, V41, V42, D59, and E112.

This sequence belongs to the GTP-dependent DPCK family.

The catalysed reaction is 3'-dephospho-CoA + GTP = GDP + CoA + H(+). The protein operates within cofactor biosynthesis; coenzyme A biosynthesis. Catalyzes the GTP-dependent phosphorylation of the 3'-hydroxyl group of dephosphocoenzyme A to form coenzyme A (CoA). The sequence is that of GTP-dependent dephospho-CoA kinase from Methanoculleus marisnigri (strain ATCC 35101 / DSM 1498 / JR1).